The chain runs to 526 residues: Cytochrome P450 monooxygenase COX2 (526 aa).

Asn-11 is a glycosylation site (N-linked (GlcNAc...) asparagine). A helical transmembrane segment spans residues 12-31 (ITTNHVAAAVCAGIAVYAIV). Asn-302 carries an N-linked (GlcNAc...) asparagine glycan. Residue Cys-450 participates in heme binding.

This sequence belongs to the cytochrome P450 family. Heme is required as a cofactor.

Its subcellular location is the membrane. It participates in secondary metabolite biosynthesis. Functionally, cytochrome P450 monooxygenase; part of the gene cluster that mediates the biosynthesis of alpha-cuprenene and oxidized derivatives. The alpha-cuprenene synthase COP6 is the only sesquiterpene synthase identified in C.cinereus that appears to be part of a biosynthetic gene cluster and is highly specific since it catalyzes the cyclization of (2E,6E)-farnesyl diphosphate into only one product, alpha-cuprenene. The cytochrome P450 monooxygenase COX2 then oxidizes the cyclohexadiene ring of alpha-cuprenene at positions 1 and 4, yielding first alpha-cuparene, followed by alpha-cuparophenol and a further yet unidentified compound resulting from one additional oxidation step. The cytochrome P450 monooxygenase COX1 then likely catalyzes the oxidation at position 9 of the pentane ring of alpha-cuprenene to give the corresponding hydroxy or ketone derivatives. The polypeptide is Cytochrome P450 monooxygenase COX2 (Coprinopsis cinerea (strain Okayama-7 / 130 / ATCC MYA-4618 / FGSC 9003) (Inky cap fungus)).